Here is a 657-residue protein sequence, read N- to C-terminus: Pentatricopeptide repeat-containing protein CRR2, chloroplastic (657 aa).

Residues 1 to 51 (MFLSHPPQVIQPTYHTVNFLPRSPLKPPSCSVALNNPSISSGAGAKISNNQ) constitute a chloroplast transit peptide. PPR repeat units lie at residues 45–75 (AKIS…ESSP), 76–110 (SQQT…GSDQ), 111–141 (DPFL…TRKR), 142–176 (TIYV…GVES), 177–215 (DRFT…GYSS), 216–246 (HVYI…MPVR), 247–277 (NVVS…MMRE), 284–318 (NSVT…GLDS), 319–349 (ILPV…MHDR), 350–384 (DVVS…GASP), 385–420 (TPVT…GIKP), and 421–451 (QIEH…MRTE). Residues 456 to 531 (VWGSLLGSCR…LPGRCWMEVR (76 aa)) form a type E motif region. The segment at 532–562 (RKMYSFVSVDEFNPLMEQIHAFLVKLAEDMK) is type E(+) motif. The interval 563–657 (EKGYIPQTKG…NGVCSCGDYW (95 aa)) is type DYW motif.

The protein belongs to the PPR family. PCMP-H subfamily.

It is found in the plastid. The protein localises to the chloroplast. Its function is as follows. Required for the intergenic processing between chloroplast rsp7 and ndhB transcripts. Necessary for chloroplast NADH dehydrogenase-like (NDH) complex-dependent cyclic electron transport around PSI (CET). This chain is Pentatricopeptide repeat-containing protein CRR2, chloroplastic, found in Arabidopsis thaliana (Mouse-ear cress).